Consider the following 668-residue polypeptide: Lebercilin-like protein (668 aa).

The interval 17 to 44 is disordered; the sequence is SVALENNRRSAECKRSPGTGDFSRNSSA. Residues 22–31 are compositionally biased toward basic and acidic residues; the sequence is NNRRSAECKR. Coiled coils occupy residues 148–259 and 305–336; these read LHKI…EREE and AAQT…IKNI. A disordered region spans residues 351–402; that stretch reads YPKVSSTKSVQADRKSLPFTSMRHQGTQKSDVPPLTTKGKKATGNMNHKEKS. Residues 368 to 380 show a composition bias toward polar residues; sequence PFTSMRHQGTQKS. A coiled-coil region spans residues 420-440; it reads EDSKTKYEDLSREEKHLEVQV. 3 disordered regions span residues 495–520, 533–581, and 605–668; these read RSMQ…PLRQ, LHHG…FGKS, and SGYV…KIII. The span at 546 to 558 shows a compositional bias: polar residues; the sequence is AGNTKYSHSTSKH. 2 stretches are compositionally biased toward basic and acidic residues: residues 560–572 and 621–632; these read SNRE…HSDS and GSEEPLQSKESH. The span at 633–660 shows a compositional bias: polar residues; it reads PPSQASASNAFGDSKVTVVNSIKPSSPT.

Belongs to the LCA5 family.

In Macaca fascicularis (Crab-eating macaque), this protein is Lebercilin-like protein.